Here is a 175-residue protein sequence, read N- to C-terminus: Ribosome maturation factor RimM (175 aa).

The 78-residue stretch at 98–175 (EGEYYWHQLE…EMRVDWDADF (78 aa)) folds into the PRC barrel domain.

This sequence belongs to the RimM family. Binds ribosomal protein uS19.

Its subcellular location is the cytoplasm. In terms of biological role, an accessory protein needed during the final step in the assembly of 30S ribosomal subunit, possibly for assembly of the head region. Essential for efficient processing of 16S rRNA. May be needed both before and after RbfA during the maturation of 16S rRNA. It has affinity for free ribosomal 30S subunits but not for 70S ribosomes. The chain is Ribosome maturation factor RimM from Pseudomonas aeruginosa (strain UCBPP-PA14).